Here is a 384-residue protein sequence, read N- to C-terminus: Protein NDRG1 (384 aa).

S2 carries the N-acetylserine modification. Phosphoserine occurs at positions 2, 319, and 326. A disordered region spans residues R325–C384. Residues R327 to S336 are compositionally biased toward polar residues. At T328 the chain carries Phosphothreonine; by SGK1. 2 positions are modified to phosphoserine; by SGK1: S330 and S332. S333 is subject to Phosphoserine. At T335 the chain carries Phosphothreonine. A phosphoserine mark is found at S336 and S342. 2 consecutive repeat copies span residues G339 to E348 and G349 to E358. The tract at residues G339–E358 is 2 X 10 AA tandem repeats of G-[PST]-R-S-R-S-H-T-S-E. Residues H345–R361 are compositionally biased toward basic and acidic residues. T346 is subject to Phosphothreonine; by SGK1. Phosphoserine is present on S352. T356 is subject to Phosphothreonine; by SGK1. The segment covering S374–C384 has biased composition (low complexity).

Belongs to the NDRG family. In terms of assembly, interacts with RAB4A (membrane-bound form); the interaction involves NDRG1 in vesicular recycling of CDH1. Interacts with APOA1, APOA2, PRA1 and RTN1. In terms of processing, under stress conditions, phosphorylated in the C-terminal on many serine and threonine residues. Phosphorylated in vitro by PKA. Phosphorylation enhanced by increased intracellular cAMP levels. Homocysteine induces dephosphorylation. Phosphorylation by SGK1 is cell cycle dependent.

It localises to the cytoplasm. It is found in the cytosol. Its subcellular location is the cytoskeleton. The protein resides in the microtubule organizing center. The protein localises to the centrosome. It localises to the nucleus. It is found in the cell membrane. Functionally, stress-responsive protein involved in hormone responses, cell growth, and differentiation. Acts as a tumor suppressor in many cell types. Necessary but not sufficient for p53/TP53-mediated caspase activation and apoptosis. Has a role in cell trafficking notably of the Schwann cell and is necessary for the maintenance and development of the peripheral nerve myelin sheath. Required for vesicular recycling of CDH1 and TF. May also function in lipid trafficking. Protects cells from spindle disruption damage. Functions in p53/TP53-dependent mitotic spindle checkpoint. Regulates microtubule dynamics and maintains euploidy. This chain is Protein NDRG1 (NDRG1), found in Bos taurus (Bovine).